Reading from the N-terminus, the 308-residue chain is Cysteine synthase (308 aa).

An N6-(pyridoxal phosphate)lysine modification is found at K45. Pyridoxal 5'-phosphate contacts are provided by residues N75, 179 to 183, and S267; that span reads GTGGT.

This sequence belongs to the cysteine synthase/cystathionine beta-synthase family. Homodimer. Forms CymR(2):CysK(2) or CymR(4):CysK(4) complexes in the absence of O-acetylserine. The cofactor is pyridoxal 5'-phosphate.

The enzyme catalyses O-acetyl-L-serine + hydrogen sulfide = L-cysteine + acetate. It functions in the pathway amino-acid biosynthesis; L-cysteine biosynthesis; L-cysteine from L-serine: step 2/2. Functionally, catalyzes the conversion of O-acetylserine to cysteine. Also acts as a sensor of cysteine availability in the signal transduction pathway modulating CymR activity. When cysteine is present, the pool of O-acetylserine (OAS) is low, which leads to the formation of a CymR-CysK complex and transcriptional repression of the CymR regulon occurs. In the absence of cysteine, the OAS pool is high and the CymR-CysK complex is mostly dissociated, leading to a faster dissociation of CymR from its DNA targets and the lifting of CymR-dependent repression. This Bacillus subtilis (strain 168) protein is Cysteine synthase (cysK).